The sequence spans 466 residues: Cysteine--tRNA ligase (466 aa).

Cysteine 28 lines the Zn(2+) pocket. The 'HIGH' region motif lies at 30–40 (PTVYNYIHIGN). 3 residues coordinate Zn(2+): cysteine 208, histidine 233, and glutamate 237. The 'KMSKS' region motif lies at 265–269 (KMSKS). Lysine 268 contacts ATP.

The protein belongs to the class-I aminoacyl-tRNA synthetase family. Monomer. It depends on Zn(2+) as a cofactor.

The protein resides in the cytoplasm. The enzyme catalyses tRNA(Cys) + L-cysteine + ATP = L-cysteinyl-tRNA(Cys) + AMP + diphosphate. In Staphylococcus aureus (strain MRSA252), this protein is Cysteine--tRNA ligase.